The sequence spans 345 residues: Protein RecA (345 aa).

66 to 73 (GPESSGKT) contributes to the ATP binding site.

The protein belongs to the RecA family.

The protein localises to the cytoplasm. Can catalyze the hydrolysis of ATP in the presence of single-stranded DNA, the ATP-dependent uptake of single-stranded DNA by duplex DNA, and the ATP-dependent hybridization of homologous single-stranded DNAs. It interacts with LexA causing its activation and leading to its autocatalytic cleavage. This is Protein RecA from Helicobacter hepaticus (strain ATCC 51449 / 3B1).